The following is a 289-amino-acid chain: Arabinogalactan O-methyltransferase 1 (289 aa).

The chain crosses the membrane as a helical span at residues 12–32 (IITGVLLAGLVGGALLFTSFI).

This sequence belongs to the methyltransferase superfamily. As to quaternary structure, binds to the translation initiation factors TIF3E1.

It is found in the golgi apparatus membrane. Functionally, involved in the methylation of glucuronic acid of different plant cell wall component, but mainly on side chains of arabinogalactans. This is Arabinogalactan O-methyltransferase 1 (AGM1) from Arabidopsis thaliana (Mouse-ear cress).